The primary structure comprises 404 residues: Proteasomal ubiquitin receptor ADRM1-A (404 aa).

The region spanning 17-130 (SSSKYLVEFR…RKLNEYLNNP (114 aa)) is the Pru domain. Over residues 195–247 (GSGGPTTSSSSSSSRSQSAAVTPSSTTSSTRTTSAPVAPAAAPATTPSPAVSS) the composition is skewed to low complexity. Disordered stretches follow at residues 195 to 258 (GSGG…TSPT) and 376 to 404 (FAKAMQSTSSQKERESSEKKEEEEDMSLD). Polar residues predominate over residues 248–258 (NDGASEATSPT). A DEUBAD domain is found at 278–390 (TGEGGQQVDL…QSTSSQKERE (113 aa)). Positions 386 to 395 (QKERESSEKK) are enriched in basic and acidic residues.

The protein belongs to the ADRM1 family. As to quaternary structure, component of the 19S proteasome regulatory particle complex. The 26S proteasome consists of a 20S core particle (CP) and two 19S regulatory subunits (RP).

Its subcellular location is the cytoplasm. It is found in the nucleus. Its function is as follows. Component of the 26S proteasome, a multiprotein complex involved in the ATP-dependent degradation of ubiquitinated proteins. This complex plays a key role in the maintenance of protein homeostasis by removing misfolded or damaged proteins, which could impair cellular functions, and by removing proteins whose functions are no longer required. Therefore, the proteasome participates in numerous cellular processes, including cell cycle progression, apoptosis, or DNA damage repair. Within the complex, functions as a proteasomal ubiquitin receptor. This chain is Proteasomal ubiquitin receptor ADRM1-A (adrm1-a), found in Xenopus laevis (African clawed frog).